We begin with the raw amino-acid sequence, 399 residues long: MTIRTLDDLLAEEVTGRRVLVRADLNVPLDKQTGQIADDGRIRAVLPTLSALVQAGAKVVVCSHLGRPKGSPNPVFSLRPVAGRLGELLGAPVHFAEDTVGDSARSTVADLADGQVALLENLRFNPGETSKDEAERGAFADQLAALADAYVDDAFGAVHRRHASVYDVPARLPHVAGRLVLREVEVLGTLAGEPDRPYVVVLGGSKVSDKLAVIEALLPKVDRLLVGGGMCFTFLKAQGHEVGSSLLEEEMVETCRSLLERADGKIMLPVDVVAADAFAPDAPHDTVRADGIPSKRVGLDIGPETVAGFAAALRGARTIFWNGPMGVFEMAAFAHGTRGVAEAIATSDAFTVVGGGDSAAAVRALGLDEQAFSHISTGGGASLEYLEGKTLPGIAALES.

Substrate is bound by residues 24 to 26, R41, 64 to 67, R123, and R160; these read DLN and HLGR. ATP-binding positions include K210, G298, E329, and 355–358; that span reads GGDS.

Belongs to the phosphoglycerate kinase family. As to quaternary structure, monomer.

It localises to the cytoplasm. The catalysed reaction is (2R)-3-phosphoglycerate + ATP = (2R)-3-phospho-glyceroyl phosphate + ADP. The protein operates within carbohydrate degradation; glycolysis; pyruvate from D-glyceraldehyde 3-phosphate: step 2/5. The sequence is that of Phosphoglycerate kinase from Salinispora tropica (strain ATCC BAA-916 / DSM 44818 / JCM 13857 / NBRC 105044 / CNB-440).